The primary structure comprises 440 residues: Beta-1,3-galactosyl-O-glycosyl-glycoprotein beta-1,6-N-acetylglucosaminyltransferase (440 aa).

Topologically, residues 1 to 9 (MKMAGWKKK) are cytoplasmic. A helical; Signal-anchor for type II membrane protein membrane pass occupies residues 10 to 30 (LCPGHHLWALGCYMLLAVVSL). Over 31–440 (RLSLRFKCDV…RHKAIYGTEL (410 aa)) the chain is Lumenal. Asn72 and Asn108 each carry an N-linked (GlcNAc...) asparagine; by host glycan. 4 disulfides stabilise this stretch: Cys73–Cys230, Cys164–Cys384, Cys185–Cys212, and Cys393–Cys425.

The protein belongs to the glycosyltransferase 14 family.

The protein localises to the host Golgi apparatus membrane. It catalyses the reaction a 3-O-[beta-D-galactosyl-(1-&gt;3)-N-acetyl-alpha-D-galactosaminyl]-L-seryl-[protein] + UDP-N-acetyl-alpha-D-glucosamine = 3-O-{beta-D-galactosyl-(1-&gt;3)-[N-acetyl-beta-D-glucosaminyl-(1-&gt;6)]-N-acetyl-alpha-D-galactosaminyl}-L-seryl-[protein] + UDP + H(+). The catalysed reaction is a 3-O-[beta-D-galactosyl-(1-&gt;3)-N-acetyl-alpha-D-galactosaminyl]-L-threonyl-[protein] + UDP-N-acetyl-alpha-D-glucosamine = a 3-O-{beta-D-galactosyl-(1-&gt;3)-[N-acetyl-beta-D-glucosaminyl-(1-&gt;6)]-N-acetyl-alpha-D-galactosaminyl}-L-threonyl-[protein] + UDP + H(+). The enzyme catalyses a beta-D-Gal-(1-&gt;4)-beta-D-GlcNAc-(1-&gt;3)-beta-D-Gal-(1-&gt;4)-beta-D-GlcNAc derivative + UDP-N-acetyl-alpha-D-glucosamine = a beta-D-Gal-(1-&gt;4)-beta-D-GlcNAc-(1-&gt;3)-[beta-D-GlcNAc-(1-&gt;6)]-beta-D-Gal-(1-&gt;4)-N-acetyl-beta-D-glucosaminyl derivative + UDP + H(+). It carries out the reaction 3-O-[N-acetyl-beta-D-glucosaminyl-(1-&gt;3)-N-acetyl-alpha-D-galactosaminyl]-L-seryl-[protein] + UDP-N-acetyl-alpha-D-glucosamine = 3-O-[N-acetyl-beta-D-glucosaminyl-(1-&gt;3)-[N-acetyl-beta-D-glucosaminyl-(1-&gt;6)]-N-acetyl-alpha-D-galactosaminyl]-L-seryl-[protein] + UDP + H(+). It catalyses the reaction a 3-O-[N-acetyl-beta-D-glucosaminyl-(1-&gt;3)-N-acetyl-alpha-D-galactosaminyl]-L-threonyl-[protein] + UDP-N-acetyl-alpha-D-glucosamine = 3-O-[N-acetyl-beta-D-glucosaminyl-(1-&gt;3)-[N-acetyl-beta-D-glucosaminyl-(1-&gt;6)]-N-acetyl-alpha-D-galactosaminyl]-L-threonyl-[protein] + UDP + H(+). Its pathway is protein modification; protein glycosylation. Its function is as follows. Non-essential glycosyltransferase that can synthesize all known mucin beta 6 N-acetylglucosaminides. Mediates core 2 and core 4 O-glycan branching, 2 important steps in mucin-type biosynthesis. Has also I-branching enzyme activity by converting linear into branched poly-N-acetyllactosaminoglycans. Contributes to the post-translational modifications of structural proteins. The sequence is that of Beta-1,3-galactosyl-O-glycosyl-glycoprotein beta-1,6-N-acetylglucosaminyltransferase (Bo17) from Bovine herpesvirus 4 (strain V. test) (BoHV-4).